We begin with the raw amino-acid sequence, 201 residues long: MSRYRGPRVRISRRLGDLPGLSRKAIKRSYPPGEHGQKSRKPSEYAVRLEEKQKLRFNYGLSEKQLFKYVKAAKKLQGSTGQILLQLLEMRLDNTVFRLGMAPTIPAARQLVNHGHICINGQVVSICSYQCKPGESISVKNQEASRKLVENYLAFPGLANIPSHLELNKSNLSGKVNGVIDREWVALQLNELLVIEYYSRK.

Positions 15–45 (LGDLPGLSRKAIKRSYPPGEHGQKSRKPSEY) are disordered. The span at 35–45 (HGQKSRKPSEY) shows a compositional bias: basic and acidic residues. Positions 90-153 (MRLDNTVFRL…ASRKLVENYL (64 aa)) constitute an S4 RNA-binding domain.

Belongs to the universal ribosomal protein uS4 family. In terms of assembly, part of the 30S ribosomal subunit. Contacts protein S5. The interaction surface between S4 and S5 is involved in control of translational fidelity.

Its subcellular location is the plastid. It is found in the chloroplast. Functionally, one of the primary rRNA binding proteins, it binds directly to 16S rRNA where it nucleates assembly of the body of the 30S subunit. With S5 and S12 plays an important role in translational accuracy. The polypeptide is Small ribosomal subunit protein uS4c (rps4) (Pyropia yezoensis (Susabi-nori)).